A 180-amino-acid polypeptide reads, in one-letter code: NAD(P)H-quinone oxidoreductase subunit I, chloroplastic (180 aa).

4Fe-4S ferredoxin-type domains follow at residues 55 to 84 (GRIH…VDWK) and 95 to 124 (LNYS…MTEE). Residues C64, C67, C70, C74, C104, C107, C110, and C114 each coordinate [4Fe-4S] cluster.

The protein belongs to the complex I 23 kDa subunit family. In terms of assembly, NDH is composed of at least 16 different subunits, 5 of which are encoded in the nucleus. The cofactor is [4Fe-4S] cluster.

The protein localises to the plastid. Its subcellular location is the chloroplast thylakoid membrane. It catalyses the reaction a plastoquinone + NADH + (n+1) H(+)(in) = a plastoquinol + NAD(+) + n H(+)(out). The catalysed reaction is a plastoquinone + NADPH + (n+1) H(+)(in) = a plastoquinol + NADP(+) + n H(+)(out). Functionally, NDH shuttles electrons from NAD(P)H:plastoquinone, via FMN and iron-sulfur (Fe-S) centers, to quinones in the photosynthetic chain and possibly in a chloroplast respiratory chain. The immediate electron acceptor for the enzyme in this species is believed to be plastoquinone. Couples the redox reaction to proton translocation, and thus conserves the redox energy in a proton gradient. This Sorghum bicolor (Sorghum) protein is NAD(P)H-quinone oxidoreductase subunit I, chloroplastic.